A 101-amino-acid polypeptide reads, in one-letter code: Small ribosomal subunit protein uS14 (101 aa).

Belongs to the universal ribosomal protein uS14 family. As to quaternary structure, part of the 30S ribosomal subunit. Contacts proteins S3 and S10.

In terms of biological role, binds 16S rRNA, required for the assembly of 30S particles and may also be responsible for determining the conformation of the 16S rRNA at the A site. In Cupriavidus necator (strain ATCC 17699 / DSM 428 / KCTC 22496 / NCIMB 10442 / H16 / Stanier 337) (Ralstonia eutropha), this protein is Small ribosomal subunit protein uS14.